The chain runs to 176 residues: NAD(P)H-quinone oxidoreductase subunit 6, chloroplastic (176 aa).

5 helical membrane-spanning segments follow: residues 10-30 (FLLVFLGSGLILGGLGVVLLP), 32-52 (PIYSAFSLGLVLVCTSLFYIL), 61-81 (AQLLIYVGAINVLIIFAVMFM), 92-112 (LWTVGDGITSMVCISLFISLI), and 152-172 (FFLPFELISIILLVALIGAIA).

The protein belongs to the complex I subunit 6 family. As to quaternary structure, NDH is composed of at least 16 different subunits, 5 of which are encoded in the nucleus.

The protein localises to the plastid. It localises to the chloroplast thylakoid membrane. It carries out the reaction a plastoquinone + NADH + (n+1) H(+)(in) = a plastoquinol + NAD(+) + n H(+)(out). It catalyses the reaction a plastoquinone + NADPH + (n+1) H(+)(in) = a plastoquinol + NADP(+) + n H(+)(out). Functionally, NDH shuttles electrons from NAD(P)H:plastoquinone, via FMN and iron-sulfur (Fe-S) centers, to quinones in the photosynthetic chain and possibly in a chloroplast respiratory chain. The immediate electron acceptor for the enzyme in this species is believed to be plastoquinone. Couples the redox reaction to proton translocation, and thus conserves the redox energy in a proton gradient. In Solanum lycopersicum (Tomato), this protein is NAD(P)H-quinone oxidoreductase subunit 6, chloroplastic (ndhG).